Reading from the N-terminus, the 216-residue chain is Probable GTP-binding protein EngB (216 aa).

Residues 26-210 (PMATIIFAGR…KNRIFEVIRE (185 aa)) form the EngB-type G domain. GTP-binding positions include 34-41 (GRSNVGKS), 59-63 (GVTRK), 76-79 (DMPG), 156-159 (NKLD), and 189-191 (ISA). Mg(2+)-binding residues include Ser41 and Thr61.

Belongs to the TRAFAC class TrmE-Era-EngA-EngB-Septin-like GTPase superfamily. EngB GTPase family. The cofactor is Mg(2+).

Necessary for normal cell division and for the maintenance of normal septation. In Pyrococcus horikoshii (strain ATCC 700860 / DSM 12428 / JCM 9974 / NBRC 100139 / OT-3), this protein is Probable GTP-binding protein EngB.